Here is a 334-residue protein sequence, read N- to C-terminus: Glycerol-1-phosphate dehydrogenase [NAD(P)+] (334 aa).

Residues 77–81 and 99–102 each bind NAD(+); these read GRPID and TTAS. Asp104 provides a ligand contact to substrate. Ser108 contacts NAD(+). Asp147 contributes to the substrate binding site. Zn(2+)-binding residues include Asp147 and His225. His229 contributes to the substrate binding site. His246 lines the Zn(2+) pocket.

It belongs to the glycerol-1-phosphate dehydrogenase family. It depends on Zn(2+) as a cofactor.

It localises to the cytoplasm. It carries out the reaction sn-glycerol 1-phosphate + NAD(+) = dihydroxyacetone phosphate + NADH + H(+). The catalysed reaction is sn-glycerol 1-phosphate + NADP(+) = dihydroxyacetone phosphate + NADPH + H(+). Its pathway is membrane lipid metabolism; glycerophospholipid metabolism. Catalyzes the NAD(P)H-dependent reduction of dihydroxyacetonephosphate (DHAP or glycerone phosphate) to glycerol 1-phosphate (G1P). The G1P thus generated is used as the glycerophosphate backbone of phospholipids in the cellular membranes of Archaea. The protein is Glycerol-1-phosphate dehydrogenase [NAD(P)+] of Methanococcus maripaludis (strain DSM 14266 / JCM 13030 / NBRC 101832 / S2 / LL).